A 210-amino-acid chain; its full sequence is MEKKRNISMAVIRRLPKYYRYLAELMDNDVDRISSKELSEKIGFTASQIRQDLNNFGDFGQQGYGYNVKDLYNEIRSILGLDENYNIAIIGAGNIGQAIANYTNFDKMGFNLKGIFDVNPKLLGLKIRDVEIRDIDQLESFLQEEKIHIGVICVTKSNAQDVCNTLIKNGVKGIWNFAPIDLNGADNVVIENVHLSESLLTLTYLLNGFN.

The segment at residues 17–56 is a DNA-binding region (H-T-H motif); that stretch reads KYYRYLAELMDNDVDRISSKELSEKIGFTASQIRQDLNNF. Residue 91–96 coordinates NAD(+); it reads GAGNIG.

It belongs to the transcriptional regulatory Rex family. In terms of assembly, homodimer.

It is found in the cytoplasm. Functionally, modulates transcription in response to changes in cellular NADH/NAD(+) redox state. The chain is Redox-sensing transcriptional repressor Rex from Clostridium novyi (strain NT).